The following is an 855-amino-acid chain: Potassium channel AKT2 (855 aa).

Residues methionine 1 to serine 12 show a composition bias toward low complexity. The tract at residues methionine 1–glycine 24 is disordered. At methionine 1–aspartate 75 the chain is on the cytoplasmic side. Residues glycine 13–glycine 24 are compositionally biased toward gly residues. A helical transmembrane segment spans residues threonine 76–methionine 96. Topologically, residues asparagine 97–glutamate 105 are extracellular. A helical transmembrane segment spans residues valine 106 to alanine 126. Residues tyrosine 127–threonine 149 lie on the Cytoplasmic side of the membrane. The chain crosses the membrane as a helical span at residues phenylalanine 150–glycine 170. The Extracellular portion of the chain corresponds to glutamate 171 to serine 179. A helical; Voltage-sensor transmembrane segment spans residues leucine 180–glutamate 200. Residues lysine 201–arginine 214 lie on the Cytoplasmic side of the membrane. Residues leucine 215–aspartate 235 form a helical membrane-spanning segment. Residues arginine 236–threonine 262 are Extracellular-facing. Positions serine 263–alanine 282 form an intramembrane region, pore-forming. The Extracellular segment spans residues glutamine 283–threonine 285. A helical membrane pass occupies residues valine 286–isoleucine 306. The Cytoplasmic portion of the chain corresponds to glycine 307–serine 855. Leucine 391–histidine 511 contributes to the a nucleoside 3',5'-cyclic phosphate binding site. ANK repeat units follow at residues asparagine 536–valine 565, lysine 569–isoleucine 598, glutamine 602–proline 631, alanine 634–serine 663, and aspartate 667–arginine 696. The interval glutamate 744 to histidine 765 is disordered. Positions arginine 768–serine 855 constitute a KHA domain.

Belongs to the potassium channel family. Plant (TC 1.A.1.4) subfamily. The potassium channel is probably a homo- or heterotetrameric complex of pore-forming subunits.

It is found in the membrane. Functionally, probable inward-rectifying potassium channel. Assuming opened or closed conformations in response to the voltage difference across the membrane, the channel is activated by hyperpolarization. The polypeptide is Potassium channel AKT2 (Oryza sativa subsp. japonica (Rice)).